Reading from the N-terminus, the 546-residue chain is Chaperonin GroEL (546 aa).

ATP contacts are provided by residues 30 to 33 (TLGP), lysine 51, 87 to 91 (DGTTT), glycine 415, and aspartate 495.

It belongs to the chaperonin (HSP60) family. In terms of assembly, forms a cylinder of 14 subunits composed of two heptameric rings stacked back-to-back. Interacts with the co-chaperonin GroES.

It is found in the cytoplasm. It carries out the reaction ATP + H2O + a folded polypeptide = ADP + phosphate + an unfolded polypeptide.. In terms of biological role, together with its co-chaperonin GroES, plays an essential role in assisting protein folding. The GroEL-GroES system forms a nano-cage that allows encapsulation of the non-native substrate proteins and provides a physical environment optimized to promote and accelerate protein folding. In Brucella melitensis biotype 1 (strain ATCC 23456 / CCUG 17765 / NCTC 10094 / 16M), this protein is Chaperonin GroEL.